Reading from the N-terminus, the 37-residue chain is Large ribosomal subunit protein bL36 (37 aa).

Belongs to the bacterial ribosomal protein bL36 family.

In Cyanothece sp. (strain PCC 7425 / ATCC 29141), this protein is Large ribosomal subunit protein bL36.